The following is a 782-amino-acid chain: Cysteine-rich protein 2-binding protein (782 aa).

Position 4 is a phosphoserine (S4). The tract at residues 13–33 is disordered; that stretch reads RHDDEATRTSTSEGLEEGEVE. An N6-acetyllysine modification is found at K231. Residues 251–282 form a disordered region; that stretch reads PVESAMELKEKRSRTQEAKDIRRAQKEAAGFL. Over residues 256 to 276 the composition is skewed to basic and acidic residues; sequence MELKEKRSRTQEAKDIRRAQK. A Phosphoserine modification is found at S285. K292 bears the N6-acetyllysine mark. A compositionally biased stretch (low complexity) spans 315-335; sequence LSSSDRTPLTSPSPSPSLDFS. 2 disordered regions span residues 315 to 346 and 400 to 460; these read LSSSDRTPLTSPSPSPSLDFSAPGTPASHSAT and VRKK…EPRY. Basic and acidic residues-rich tracts occupy residues 405-426 and 446-459; these read RGPEQIKQEVESEEEKPDRMDI and KPQLEKDTKPKEPR. Phosphoserine is present on S416. In terms of domain architecture, N-acetyltransferase spans 638–782; that stretch reads LDYCYVRPNH…KHAFFLRLRR (145 aa).

As to quaternary structure, interacts with the LIM 1 domain of CSRP2. Component of the ADA2A-containing complex (ATAC), composed of CSRP2BP, KAT2A, TADA2L, TADA3L, ZZ3, MBIP, WDR5, YEATS2, CCDC101 and DR1. In the complex, it probably interacts directly with KAT2A, MBIP and WDR5. Expressed in skeletal muscle, heart, lung, placenta, brain, liver, pancreas and kidney. High expression in skeletal muscle and heart. Lower expression in lung.

It localises to the nucleus. Its subcellular location is the cytoplasm. Component of the ATAC complex, a complex with histone acetyltransferase activity on histones H3 and H4. May function as a scaffold for the ATAC complex to promote ATAC complex stability. Has also weak histone acetyltransferase activity toward histone H4. Required for the normal progression through G1 and G2/M phases of the cell cycle. The polypeptide is Cysteine-rich protein 2-binding protein (Homo sapiens (Human)).